The primary structure comprises 624 residues: Chaperone protein DnaK (624 aa).

A Phosphothreonine; by autocatalysis modification is found at threonine 174. 2 disordered regions span residues lysine 544–serine 563 and asparagine 576–lysine 624. Positions glutamine 581–glycine 600 are enriched in low complexity. Residues serine 601–lysine 624 show a composition bias toward basic and acidic residues.

It belongs to the heat shock protein 70 family.

Functionally, acts as a chaperone. This Lacticaseibacillus casei (strain BL23) (Lactobacillus casei) protein is Chaperone protein DnaK.